The primary structure comprises 315 residues: Ribose-phosphate pyrophosphokinase (315 aa).

Residues 37 to 39 (DGE) and 96 to 97 (RQ) each bind ATP. Mg(2+) is bound by residues H131 and D170. K194 is an active-site residue. D-ribose 5-phosphate-binding positions include R196, D220, and 224 to 228 (DTGGT).

It belongs to the ribose-phosphate pyrophosphokinase family. Class I subfamily. As to quaternary structure, homohexamer. Mg(2+) serves as cofactor.

The protein resides in the cytoplasm. It carries out the reaction D-ribose 5-phosphate + ATP = 5-phospho-alpha-D-ribose 1-diphosphate + AMP + H(+). It participates in metabolic intermediate biosynthesis; 5-phospho-alpha-D-ribose 1-diphosphate biosynthesis; 5-phospho-alpha-D-ribose 1-diphosphate from D-ribose 5-phosphate (route I): step 1/1. Involved in the biosynthesis of the central metabolite phospho-alpha-D-ribosyl-1-pyrophosphate (PRPP) via the transfer of pyrophosphoryl group from ATP to 1-hydroxyl of ribose-5-phosphate (Rib-5-P). The polypeptide is Ribose-phosphate pyrophosphokinase (Salmonella typhi).